A 251-amino-acid polypeptide reads, in one-letter code: Cell division protein ZapD (251 aa).

It belongs to the ZapD family. Interacts with FtsZ.

The protein localises to the cytoplasm. In terms of biological role, cell division factor that enhances FtsZ-ring assembly. Directly interacts with FtsZ and promotes bundling of FtsZ protofilaments, with a reduction in FtsZ GTPase activity. This Paraburkholderia phymatum (strain DSM 17167 / CIP 108236 / LMG 21445 / STM815) (Burkholderia phymatum) protein is Cell division protein ZapD.